Reading from the N-terminus, the 1382-residue chain is DNA-directed RNA polymerase subunit beta'' (1382 aa).

4 residues coordinate Zn(2+): cysteine 224, cysteine 294, cysteine 301, and cysteine 304.

The protein belongs to the RNA polymerase beta' chain family. RpoC2 subfamily. In plastids the minimal PEP RNA polymerase catalytic core is composed of four subunits: alpha, beta, beta', and beta''. When a (nuclear-encoded) sigma factor is associated with the core the holoenzyme is formed, which can initiate transcription. Zn(2+) serves as cofactor.

It localises to the plastid. Its subcellular location is the chloroplast. It catalyses the reaction RNA(n) + a ribonucleoside 5'-triphosphate = RNA(n+1) + diphosphate. DNA-dependent RNA polymerase catalyzes the transcription of DNA into RNA using the four ribonucleoside triphosphates as substrates. In Dioscorea elephantipes (Elephant's foot yam), this protein is DNA-directed RNA polymerase subunit beta''.